We begin with the raw amino-acid sequence, 396 residues long: Actin-related protein 6 (396 aa).

The protein belongs to the actin family. ARP6 subfamily. As to quaternary structure, interacts with CBX1 and CBX3.

Its subcellular location is the cytoplasm. The protein resides in the cytoskeleton. It localises to the nucleus. The protein localises to the nucleolus. Its function is as follows. Required for formation and/or maintenance of the proper nucleolar structure and function. Plays a dual role in the regulation of ribosomal DNA (rDNA) transcription. In the presence of high glucose, it maintains active rDNA transcription through H2A.Z deposition and under glucose starvation, is required for the repression of rDNA transcription, and this function may be independent of H2A.Z. The polypeptide is Actin-related protein 6 (ACTR6) (Gallus gallus (Chicken)).